A 309-amino-acid chain; its full sequence is tRNA dimethylallyltransferase (309 aa).

9–16 serves as a coordination point for ATP; the sequence is GPTAIGKT. 11-16 contributes to the substrate binding site; it reads TAIGKT. 2 interaction with substrate tRNA regions span residues 34-37 and 164-168; these read DSRQ and QRMMR.

Belongs to the IPP transferase family. As to quaternary structure, monomer. Requires Mg(2+) as cofactor.

It catalyses the reaction adenosine(37) in tRNA + dimethylallyl diphosphate = N(6)-dimethylallyladenosine(37) in tRNA + diphosphate. Functionally, catalyzes the transfer of a dimethylallyl group onto the adenine at position 37 in tRNAs that read codons beginning with uridine, leading to the formation of N6-(dimethylallyl)adenosine (i(6)A). The polypeptide is tRNA dimethylallyltransferase (Flavobacterium johnsoniae (strain ATCC 17061 / DSM 2064 / JCM 8514 / BCRC 14874 / CCUG 350202 / NBRC 14942 / NCIMB 11054 / UW101) (Cytophaga johnsonae)).